We begin with the raw amino-acid sequence, 274 residues long: Kit ligand (274 aa).

The signal sequence occupies residues 1 to 25; sequence MKKTQTWIITCIYLQLLLFNPLVRT. Glutamine 26 is subject to Pyrrolidone carboxylic acid. Over 26 to 215 the chain is Extracellular; it reads QGICRNRVTD…SDSIEDSSLQ (190 aa). Cystine bridges form between cysteine 29/cysteine 114 and cysteine 68/cysteine 164. N-linked (GlcNAc...) asparagine glycans are attached at residues asparagine 90, asparagine 97, asparagine 145, and asparagine 196. Residues 216–238 form a helical membrane-spanning segment; the sequence is WAAVALPAFFSLVIGFAFGALYW. At 239 to 274 the chain is on the cytoplasmic side; that stretch reads KKKQPNLTRTVENIQINEEDNEISMLQEKEREFQEV.

It belongs to the SCF family. In terms of assembly, homodimer, non-covalently linked. Heterotetramer with KIT, binding two KIT molecules; thereby mediates KIT dimerization and subsequent activation by autophosphorylation. A soluble form is produced by proteolytic processing of the extracellular domain.

The protein resides in the cytoplasm. It localises to the cytoskeleton. It is found in the cell membrane. Its subcellular location is the cell projection. The protein localises to the lamellipodium. The protein resides in the filopodium. It localises to the secreted. Functionally, ligand for the receptor-type protein-tyrosine kinase KIT. Plays an essential role in the regulation of cell survival and proliferation, hematopoiesis, stem cell maintenance, gametogenesis, mast cell development, migration and function, and in melanogenesis. KITLG/SCF binding can activate several signaling pathways. Promotes phosphorylation of PIK3R1, the regulatory subunit of phosphatidylinositol 3-kinase, and subsequent activation of the kinase AKT1. KITLG/SCF and KIT also transmit signals via GRB2 and activation of RAS, RAF1 and the MAP kinases MAPK1/ERK2 and/or MAPK3/ERK1. KITLG/SCF and KIT promote activation of STAT family members STAT1, STAT3 and STAT5. KITLG/SCF and KIT promote activation of PLCG1, leading to the production of the cellular signaling molecules diacylglycerol and inositol 1,4,5-trisphosphate. KITLG/SCF acts synergistically with other cytokines, probably interleukins. The sequence is that of Kit ligand (KITLG) from Sus scrofa (Pig).